The following is a 305-amino-acid chain: MALCALTRALRSLNLAPPTVAAPAPSLFPAAQMMNNGLLQQPSALMLLPCRPVLTSVALNANFVSWKSRTKYTITPVKMRKSGGRDHTGRIRVHGIGGGHKQRYRMIDFLRFRPEETKSGPFEEKVIQVRYDPCRSADIALVAGGSRKRWIIATENMQAGDTILNSNHIGRMAVAAREGDAHPLGALPVGTLINNVESEPGRGAQYIRAAGTCGVLLRKVNGTAIIQLPSKRQMQVLETCVATVGRVSNVDHNKRVIGKAGRNRWLGKRPNSGRWHRKGGWAGRKIRPLPPMKSYVKLPSASAQS.

The N-terminal 60 residues, 1–60 (MALCALTRALRSLNLAPPTVAAPAPSLFPAAQMMNNGLLQQPSALMLLPCRPVLTSVALN), are a transit peptide targeting the mitochondrion. The segment at 264–283 (RWLGKRPNSGRWHRKGGWAG) is disordered. The span at 274-283 (RWHRKGGWAG) shows a compositional bias: basic residues.

The protein belongs to the universal ribosomal protein uL2 family. In terms of assembly, component of the mitochondrial large ribosomal subunit (mt-LSU). Mature mammalian 55S mitochondrial ribosomes consist of a small (28S) and a large (39S) subunit. The 28S small subunit contains a 12S ribosomal RNA (12S mt-rRNA) and 30 different proteins. The 39S large subunit contains a 16S rRNA (16S mt-rRNA), a copy of mitochondrial valine transfer RNA (mt-tRNA(Val)), which plays an integral structural role, and 52 different proteins.

The protein localises to the mitochondrion. The chain is Large ribosomal subunit protein uL2m (MRPL2) from Homo sapiens (Human).